A 256-amino-acid polypeptide reads, in one-letter code: Thiazole synthase (256 aa).

The Schiff-base intermediate with DXP role is filled by Lys-95. 1-deoxy-D-xylulose 5-phosphate is bound by residues Gly-156, 182–183 (AG), and 204–205 (NT).

This sequence belongs to the ThiG family. As to quaternary structure, homotetramer. Forms heterodimers with either ThiH or ThiS.

It is found in the cytoplasm. It catalyses the reaction [ThiS sulfur-carrier protein]-C-terminal-Gly-aminoethanethioate + 2-iminoacetate + 1-deoxy-D-xylulose 5-phosphate = [ThiS sulfur-carrier protein]-C-terminal Gly-Gly + 2-[(2R,5Z)-2-carboxy-4-methylthiazol-5(2H)-ylidene]ethyl phosphate + 2 H2O + H(+). Its pathway is cofactor biosynthesis; thiamine diphosphate biosynthesis. Its function is as follows. Catalyzes the rearrangement of 1-deoxy-D-xylulose 5-phosphate (DXP) to produce the thiazole phosphate moiety of thiamine. Sulfur is provided by the thiocarboxylate moiety of the carrier protein ThiS. In vitro, sulfur can be provided by H(2)S. The protein is Thiazole synthase of Salmonella arizonae (strain ATCC BAA-731 / CDC346-86 / RSK2980).